Here is a 190-residue protein sequence, read N- to C-terminus: Large ribosomal subunit protein uL6 (190 aa).

Belongs to the universal ribosomal protein uL6 family.

The polypeptide is Large ribosomal subunit protein uL6 (RpL9) (Spodoptera frugiperda (Fall armyworm)).